Reading from the N-terminus, the 323-residue chain is Cyclin-D5-1 (323 aa).

2 disordered regions span residues 17-36 (ESSL…KQEP) and 281-323 (HMTP…MRRL).

It belongs to the cyclin family. Cyclin D subfamily.

In Arabidopsis thaliana (Mouse-ear cress), this protein is Cyclin-D5-1 (CYCD5-1).